The sequence spans 339 residues: D-erythrose-4-phosphate dehydrogenase (339 aa).

12–13 lines the NAD(+) pocket; the sequence is RI. Residues 154-156, Arg200, 213-214, and Arg236 contribute to the substrate site; these read SCT and TK. Cys155 serves as the catalytic Nucleophile. Residue Asn318 participates in NAD(+) binding.

Belongs to the glyceraldehyde-3-phosphate dehydrogenase family. Epd subfamily. Homotetramer.

The protein resides in the cytoplasm. It catalyses the reaction D-erythrose 4-phosphate + NAD(+) + H2O = 4-phospho-D-erythronate + NADH + 2 H(+). It participates in cofactor biosynthesis; pyridoxine 5'-phosphate biosynthesis; pyridoxine 5'-phosphate from D-erythrose 4-phosphate: step 1/5. Catalyzes the NAD-dependent conversion of D-erythrose 4-phosphate to 4-phosphoerythronate. The chain is D-erythrose-4-phosphate dehydrogenase from Enterobacter sp. (strain 638).